Reading from the N-terminus, the 823-residue chain is MDRDLEQALDRAENIIEIAQQRPPRRRYSPRAGKTLQEKLYDIYVEECGKEPEDPQELRSNVNLLEKLVRRESLPCLLVNLYPGNQGYSVMLQREDGSFAETIRLPYEERALLDYLDAEELPPALGDVLDKASVNIFHSGCVIVEVRDYRQSSNMQPPGYQSRHILLRPTMQTLAHDVKMMTRDGQKWSQEDKLQLESQLILATAEPLCLDPSVAVACTANRLLYNKQKMNTDPMKRCLQRYSWPSVKPQQEQSDCPPPPELRVSTSGQKEERKVGQPCELNIAKAGSCVDTWKGRPCDLAVPSEVDVEKLAKGYQSVTAADPQLPVWPAQEVEDPFGFALEAGCQAWDTKPSIMQSFNDPLLCGKIRPRKKARQKSQKSPWQPFPDDHSACLRPGSETDAGRAVSQAQESVQSKVKGPGKMSHSSSGPASVSQLSSWKTPEQPDPVWVQSSVSGKGEKHPPPRTQLPSSSGKISSGNSFPPQQAGSPLKPAAPAAAASAAPSHSQKPSVPLIQASRPCPAAQPPTKFIKIAPAIQLRTGSTGLKAINVEGPVQGAQALGSSFKPVQAPGSGAPAPAGISGSDLQSSGGPLPDARPGAVQASSPAPLQFFLNTPEGLRPLTLLQVPQGSAVLTGPQQQSHQLVSLQQLQQPTAAHPPQPGPQGSALGLSTQGQAFPAQQLLKVNPTRARSGLQPQPQPAVLSLLGSAQVPQQGVQLPSVLRQQQPQPQPPKLQLQPQWQPKPRQEQPQSQQQQPQHIQLQTQQLRVLQQPQHIQLQTQQLRVLQQPVFLATGAVQIVQPHPGVQVGSQLVDQRKEGKPTPPAP.

5 disordered regions span residues 246-273, 369-524, 560-601, 631-669, and 720-757; these read SVKP…KEER, PRKK…AAQP, GSSF…AVQA, VLTG…LGLS, and LRQQ…PQHI. The span at 423–440 shows a compositional bias: polar residues; the sequence is SHSSSGPASVSQLSSWKT. 3 stretches are compositionally biased toward low complexity: residues 469-509, 568-582, and 636-650; these read SSSG…QKPS, APGS…ISGS, and QQQS…QLQQ.

Belongs to the SPT20 family.

This chain is Transcription factor SPT20 homolog-like 1 (SUPT20HL1), found in Homo sapiens (Human).